A 141-amino-acid polypeptide reads, in one-letter code: Nucleoside diphosphate kinase (141 aa).

Residues lysine 11, phenylalanine 59, arginine 87, threonine 93, arginine 104, and asparagine 114 each coordinate ATP. Residue histidine 117 is the Pros-phosphohistidine intermediate of the active site.

This sequence belongs to the NDK family. In terms of assembly, homotetramer. Mg(2+) serves as cofactor.

It localises to the cytoplasm. It carries out the reaction a 2'-deoxyribonucleoside 5'-diphosphate + ATP = a 2'-deoxyribonucleoside 5'-triphosphate + ADP. The enzyme catalyses a ribonucleoside 5'-diphosphate + ATP = a ribonucleoside 5'-triphosphate + ADP. In terms of biological role, major role in the synthesis of nucleoside triphosphates other than ATP. The ATP gamma phosphate is transferred to the NDP beta phosphate via a ping-pong mechanism, using a phosphorylated active-site intermediate. This Proteus mirabilis (strain HI4320) protein is Nucleoside diphosphate kinase.